A 416-amino-acid polypeptide reads, in one-letter code: MDASRPKSSESQSSLEAPRPGPNPSPNVVNKPLQRDSPGMVADRLPPKTGAVVIDMGTGTCKVGFAGQASPTYTVATILGCQPKKPATSGQSGLQTFIGEAARVLPELTLVQPLRSGIVVDWDAAELIWRHLLEHDLRVATHDHPLLFSDPPFSPATNREKLVEVAFESLRSPAMYVASQSVLSVYAHGRVSGLVVDTGHGVTYTVPVFQGYNLLHATERLDLAGNNLTAFLAEMLLQAGLPLGQQDLDLVENIKHHYCYVASDFQKEQARPEQEYKRTLKLPDGRTVTLGKELFQCPELLFNPPEVPGLSPVGLSTMAKQSLRKLSLEMRADLAQNVLLCGGSSLFTGFEGRFRAELLRALPAETHVVVAAQPTRNFSVWIGGSILASLRAFQSCWVLREQYEEQGPYIVYRKCY.

The disordered stretch occupies residues 1-40; it reads MDASRPKSSESQSSLEAPRPGPNPSPNVVNKPLQRDSPGM.

Belongs to the actin family. In terms of assembly, interacts with ACTL7A. In terms of tissue distribution, testis-specific.

It is found in the cytoplasmic vesicle. The protein resides in the secretory vesicle. Its subcellular location is the acrosome. The protein localises to the cytoplasm. It localises to the cytoskeleton. It is found in the perinuclear theca. Its function is as follows. Testis-specic protein that plays an important role in fusion of proacrosomal vesicles and perinuclear theca formation. The polypeptide is Actin-like protein 9 (Homo sapiens (Human)).